A 130-amino-acid chain; its full sequence is Astrocytic phosphoprotein PEA-15 (130 aa).

The DED domain occupies 3–81 (EYGTLLQDLT…RPDLLTMVVD (79 aa)). 4 positions are modified to phosphoserine: Ser61, Ser90, Ser104, and Ser116. Positions 98 to 107 (KLTRIPSAKK) are microtubule-binding. Residues 122–129 (KLAPPPKK) are microtubule-binding.

As to quaternary structure, binds RPS6KA3, MAPK3 and MAPK1. Transient interaction with PLD1 and PLD2. Interacts with CASP8 and FADD. In terms of processing, phosphorylated by protein kinase C and calcium-calmodulin-dependent protein kinase. These phosphorylation events are modulated by neurotransmitters or hormones. Ubiquitously expressed. Most abundant in tissues such as heart, brain, muscle and adipose tissue which utilize glucose as an energy source. Lower expression in glucose-producing tissues. Higher levels of expression are found in tissues from individuals with type 2 diabetes than in controls.

The protein localises to the cytoplasm. Functionally, blocks Ras-mediated inhibition of integrin activation and modulates the ERK MAP kinase cascade. Inhibits RPS6KA3 activities by retaining it in the cytoplasm. Inhibits both TNFRSF6- and TNFRSF1A-mediated CASP8 activity and apoptosis. Regulates glucose transport by controlling both the content of SLC2A1 glucose transporters on the plasma membrane and the insulin-dependent trafficking of SLC2A4 from the cell interior to the surface. The sequence is that of Astrocytic phosphoprotein PEA-15 (PEA15) from Homo sapiens (Human).